The primary structure comprises 541 residues: Myrosinase 1 (541 aa).

The N-terminal stretch at 1–19 is a signal peptide; that stretch reads MKLLMLAFVFLLALATCKG. 3 disulfide bridges follow: Cys-24-Cys-449, Cys-32-Cys-445, and Cys-224-Cys-232. Asn-33 is a glycosylation site (N-linked (GlcNAc...) asparagine). Gln-57 provides a ligand contact to a beta-D-glucoside. The N-linked (GlcNAc...) asparagine glycan is linked to Asn-108. His-159 serves as a coordination point for a beta-D-glucoside. An N-linked (GlcNAc...) asparagine glycan is attached at Asn-175. 204–205 is an a beta-D-glucoside binding site; the sequence is NQ. A glycan (N-linked (GlcNAc...) asparagine) is linked at Asn-236. Residue Tyr-348 participates in a beta-D-glucoside binding. Residues Asn-356 and Asn-379 are each glycosylated (N-linked (GlcNAc...) asparagine). A beta-D-glucoside-binding positions include Glu-420, Trp-468, 475–476, and Phe-484; that span reads EF. Glu-420 acts as the Nucleophile in catalysis. N-linked (GlcNAc...) asparagine glycosylation is found at Asn-493 and Asn-512.

The protein belongs to the glycosyl hydrolase 1 family. As to quaternary structure, homodimer. In terms of tissue distribution, expressed in guard cells, phloem-associated cells and myrosin cells.

The protein localises to the vacuole. It carries out the reaction a thioglucoside + H2O = a sugar + a thiol.. It catalyses the reaction Hydrolysis of terminal, non-reducing beta-D-glucosyl residues with release of beta-D-glucose.. Functionally, degradation of glucosinolates (glucose residue linked by a thioglucoside bound to an amino acid derivative) to glucose, sulfate and any of the products: thiocyanates, isothiocyanates, nitriles, epithionitriles or oxazolidine-2-thiones. These toxic degradation products can deter insect herbivores. Seems to function in abscisic acid (ABA) and methyl jasmonate (MeJA) signaling in guard cells. Functionally redundant with TGG2. Hydrolyzes sinigrin and, with lower efficiency, p-nitrophenyl beta-D-glucoside. The sequence is that of Myrosinase 1 from Arabidopsis thaliana (Mouse-ear cress).